A 718-amino-acid polypeptide reads, in one-letter code: Cyclomaltodextrin glucanotransferase (718 aa).

The N-terminal stretch at 1–34 is a signal peptide; it reads MFQMAKRAFLSTTLTLGLLAGSALPFLPASAAYA. The tract at residues 35–172 is A1; that stretch reads DPDIAVTNKQ…GIKIIIDFAP (138 aa). 4 residues coordinate Ca(2+): Asp61, Asn63, Asn66, and Asn67. Cys77 and Cys84 are joined by a disulfide. Ca(2+) is bound by residues Gly85 and Asp87. Substrate is bound at residue 134-135; it reads YW. Asn173 contributes to the Ca(2+) binding site. The segment at 173 to 236 is b; it reads NHTSPAMETD…NLYDLADFNH (64 aa). His174 contacts substrate. Ile224 lines the Ca(2+) pocket. 227–230 provides a ligand contact to substrate; that stretch reads NLYD. Asp233 lines the Ca(2+) pocket. The A2 stretch occupies residues 237–440; it reads NNATIDKYFK…LRKSNPAIAY (204 aa). Arg261 contributes to the substrate binding site. Catalysis depends on Asp263, which acts as the Nucleophile. 266–267 contacts substrate; sequence KH. His267 provides a ligand contact to Ca(2+). The active-site Proton donor is the Glu291. Positions 361, 405, and 409 each coordinate substrate. The segment at 441 to 528 is c; it reads GSTQQRWINN…ATAVWQYTAA (88 aa). The interval 529–614 is d; it reads ETTPTIGHVG…SNAYNHFTIL (86 aa). The region spanning 532–612 is the IPT/TIG domain; it reads PTIGHVGPVM…VNSNAYNHFT (81 aa). One can recognise a CBM20 domain in the interval 613–718; it reads ILTGDQVTVR…GTATVTVNWQ (106 aa). The tract at residues 615–718 is e; that stretch reads TGDQVTVRFV…GTATVTVNWQ (104 aa).

The protein belongs to the glycosyl hydrolase 13 family. Monomer. It depends on Ca(2+) as a cofactor.

Its subcellular location is the secreted. It catalyses the reaction Cyclizes part of a (1-&gt;4)-alpha-D-glucan chain by formation of a (1-&gt;4)-alpha-D-glucosidic bond.. The chain is Cyclomaltodextrin glucanotransferase (cgt) from Bacillus sp. (strain 6.6.3).